The sequence spans 289 residues: Acetyl-coenzyme A carboxylase carboxyl transferase subunit beta 2 (289 aa).

Positions 25–289 (VWTKCPSCDQ…TNTSIRLEVK (265 aa)) constitute a CoA carboxyltransferase N-terminal domain. 4 residues coordinate Zn(2+): C29, C32, C48, and C51. The C4-type zinc-finger motif lies at 29 to 51 (CPSCDQVLYRIALKENLEVCPKC).

This sequence belongs to the AccD/PCCB family. In terms of assembly, acetyl-CoA carboxylase is a heterohexamer composed of biotin carboxyl carrier protein (AccB), biotin carboxylase (AccC) and two subunits each of ACCase subunit alpha (AccA) and ACCase subunit beta (AccD). Zn(2+) is required as a cofactor.

The protein resides in the cytoplasm. It catalyses the reaction N(6)-carboxybiotinyl-L-lysyl-[protein] + acetyl-CoA = N(6)-biotinyl-L-lysyl-[protein] + malonyl-CoA. It functions in the pathway lipid metabolism; malonyl-CoA biosynthesis; malonyl-CoA from acetyl-CoA: step 1/1. Its function is as follows. Component of the acetyl coenzyme A carboxylase (ACC) complex. Biotin carboxylase (BC) catalyzes the carboxylation of biotin on its carrier protein (BCCP) and then the CO(2) group is transferred by the transcarboxylase to acetyl-CoA to form malonyl-CoA. This chain is Acetyl-coenzyme A carboxylase carboxyl transferase subunit beta 2, found in Vibrio parahaemolyticus serotype O3:K6 (strain RIMD 2210633).